The primary structure comprises 334 residues: MSTADRTAPVTVTVTGAAGQIAYGLLFRIASGAMLGPHTPIRLRLLEIPAAVASLEGVAMELEDGAFPLLDAIDISDDPWTGFAGANVALLVGARPRTAGMERADLLAANGPIFTDQGQAINAVAADDVKVLVVGNPANTNAFIAMSNAPDVPAERFTAMTRLDHNRAIAQLAKKTGAPATEIHRIAVWGNHSATQYPDLTHATVAGRPARELVDEQWLREDFIPTVQQRGTAIIQARGASSAASAASAAIDHIHDWVLGTPAGEWTSMAVPSDGSYGVPDGLISSFPVTCADGAYRIVEGLEVDAFSRERIDASVAELTAEREAVVELGFAKG.

NAD(+) is bound at residue 16-22 (GAAGQIA). Substrate contacts are provided by arginine 97 and arginine 103. NAD(+)-binding positions include asparagine 110, glutamine 117, and 134–136 (VGN). Asparagine 136 and arginine 167 together coordinate substrate. Histidine 192 functions as the Proton acceptor in the catalytic mechanism.

It belongs to the LDH/MDH superfamily. MDH type 2 family.

It carries out the reaction (S)-malate + NAD(+) = oxaloacetate + NADH + H(+). Its function is as follows. Catalyzes the reversible oxidation of malate to oxaloacetate. In Nocardia farcinica (strain IFM 10152), this protein is Malate dehydrogenase.